A 510-amino-acid polypeptide reads, in one-letter code: GMP synthase [glutamine-hydrolyzing] (510 aa).

Residues 5–195 enclose the Glutamine amidotransferase type-1 domain; that stretch reads LVIVVDFGGQ…LYEICKADGD (191 aa). The active-site Nucleophile is cysteine 82. Active-site residues include histidine 169 and glutamate 171. Positions 196-385 constitute a GMPS ATP-PPase domain; sequence WTMENFLEEQ…LEMPEYLVYR (190 aa). 223–229 is an ATP binding site; it reads SGGVDSS.

As to quaternary structure, homodimer.

It carries out the reaction XMP + L-glutamine + ATP + H2O = GMP + L-glutamate + AMP + diphosphate + 2 H(+). Its pathway is purine metabolism; GMP biosynthesis; GMP from XMP (L-Gln route): step 1/1. Catalyzes the synthesis of GMP from XMP. The sequence is that of GMP synthase [glutamine-hydrolyzing] from Finegoldia magna (strain ATCC 29328 / DSM 20472 / WAL 2508) (Peptostreptococcus magnus).